The following is a 286-amino-acid chain: Bifunctional protein FolD (286 aa).

NADP(+)-binding positions include 166-168 and isoleucine 232; that span reads GAS.

It belongs to the tetrahydrofolate dehydrogenase/cyclohydrolase family. Homodimer.

The catalysed reaction is (6R)-5,10-methylene-5,6,7,8-tetrahydrofolate + NADP(+) = (6R)-5,10-methenyltetrahydrofolate + NADPH. It carries out the reaction (6R)-5,10-methenyltetrahydrofolate + H2O = (6R)-10-formyltetrahydrofolate + H(+). The protein operates within one-carbon metabolism; tetrahydrofolate interconversion. Catalyzes the oxidation of 5,10-methylenetetrahydrofolate to 5,10-methenyltetrahydrofolate and then the hydrolysis of 5,10-methenyltetrahydrofolate to 10-formyltetrahydrofolate. The polypeptide is Bifunctional protein FolD (Shewanella denitrificans (strain OS217 / ATCC BAA-1090 / DSM 15013)).